Here is a 216-residue protein sequence, read N- to C-terminus: Uracil phosphoribosyltransferase (216 aa).

5-phospho-alpha-D-ribose 1-diphosphate is bound by residues R85, R110, and D135–S143. Uracil-binding positions include I200 and G205 to A207. D206 is a 5-phospho-alpha-D-ribose 1-diphosphate binding site.

It belongs to the UPRTase family. The cofactor is Mg(2+).

It carries out the reaction UMP + diphosphate = 5-phospho-alpha-D-ribose 1-diphosphate + uracil. Its pathway is pyrimidine metabolism; UMP biosynthesis via salvage pathway; UMP from uracil: step 1/1. Allosterically activated by GTP. In terms of biological role, catalyzes the conversion of uracil and 5-phospho-alpha-D-ribose 1-diphosphate (PRPP) to UMP and diphosphate. The polypeptide is Uracil phosphoribosyltransferase (Paraburkholderia phytofirmans (strain DSM 17436 / LMG 22146 / PsJN) (Burkholderia phytofirmans)).